The primary structure comprises 214 residues: Adenylate kinase (214 aa).

10 to 15 (GAGKGT) lines the ATP pocket. The interval 30–59 (STGDMLRAAVKAGTPLGLEAKKVMDAGQLV) is NMP. Residues threonine 31, arginine 36, 57-59 (QLV), 85-88 (GFPR), and glutamine 92 contribute to the AMP site. Residues 122-159 (GRRVHPGSGRVYHVVFNPPKVEGKDDVTGEDLAIRPDD) form an LID region. ATP-binding positions include arginine 123 and 132–133 (VY). The AMP site is built by arginine 156 and arginine 167. Glutamine 200 contributes to the ATP binding site.

This sequence belongs to the adenylate kinase family. Monomer.

It is found in the cytoplasm. The catalysed reaction is AMP + ATP = 2 ADP. The protein operates within purine metabolism; AMP biosynthesis via salvage pathway; AMP from ADP: step 1/1. Functionally, catalyzes the reversible transfer of the terminal phosphate group between ATP and AMP. Plays an important role in cellular energy homeostasis and in adenine nucleotide metabolism. This is Adenylate kinase from Shewanella baltica (strain OS155 / ATCC BAA-1091).